Reading from the N-terminus, the 264-residue chain is tRNA pseudouridine synthase A (264 aa).

Residue aspartate 51 is the Nucleophile of the active site. Residue tyrosine 109 coordinates substrate.

This sequence belongs to the tRNA pseudouridine synthase TruA family. In terms of assembly, homodimer.

The catalysed reaction is uridine(38/39/40) in tRNA = pseudouridine(38/39/40) in tRNA. In terms of biological role, formation of pseudouridine at positions 38, 39 and 40 in the anticodon stem and loop of transfer RNAs. The sequence is that of tRNA pseudouridine synthase A from Photorhabdus laumondii subsp. laumondii (strain DSM 15139 / CIP 105565 / TT01) (Photorhabdus luminescens subsp. laumondii).